The sequence spans 113 residues: Large ribosomal subunit protein bL19 (113 aa).

Belongs to the bacterial ribosomal protein bL19 family.

This protein is located at the 30S-50S ribosomal subunit interface and may play a role in the structure and function of the aminoacyl-tRNA binding site. The protein is Large ribosomal subunit protein bL19 of Carboxydothermus hydrogenoformans (strain ATCC BAA-161 / DSM 6008 / Z-2901).